The sequence spans 190 residues: Ribosome hibernation promotion factor (190 aa).

It belongs to the HPF/YfiA ribosome-associated protein family. Long HPF subfamily. As to quaternary structure, interacts with 100S ribosomes.

Its subcellular location is the cytoplasm. Required for dimerization of active 70S ribosomes into 100S ribosomes in stationary phase; 100S ribosomes are translationally inactive and sometimes present during exponential growth. The chain is Ribosome hibernation promotion factor from Staphylococcus aureus (strain COL).